A 201-amino-acid polypeptide reads, in one-letter code: MELVLQDTQKSLTVSNNIFGYRFNEALIHQVIVAYAAHTRSGNHAQKSRAEVVGSNKKPWRQKGTGRARAGTVKSPLWRSGGVTFAAKPRDYSQKINKKMYRGALKSIFSELIRQKRLIVVEQFCIQAPKTKLLVDKLKKITLKKVLIITHLLELNLLLAARNLYTVEICDIANINLISLVTFDQVIITANSIKQIEERLI.

Residues 45-66 (AQKSRAEVVGSNKKPWRQKGTG) are disordered.

The protein belongs to the universal ribosomal protein uL4 family. In terms of assembly, part of the 50S ribosomal subunit.

One of the primary rRNA binding proteins, this protein initially binds near the 5'-end of the 23S rRNA. It is important during the early stages of 50S assembly. It makes multiple contacts with different domains of the 23S rRNA in the assembled 50S subunit and ribosome. Its function is as follows. Forms part of the polypeptide exit tunnel. This is Large ribosomal subunit protein uL4 from Baumannia cicadellinicola subsp. Homalodisca coagulata.